The chain runs to 250 residues: MTDSLIIFPAIDLKEGHVVRLSEGDMDRATIYDDDPAARARQFYEAGARYLHVVDLDGAFAGHAMNAAAVDAIVKAFPGTIELGGGIRDMNAIDGWLSRGISRVVIGTAAFENPDLVKEAAQKYPGQIVVAVDARDGMVTTKGWAEQSEISVTDMAERFADAGVVALLYTDVGRDGLKKGCNSEATLALAAATDIPVIASGGVKDIGDIELLARHTKDGIEGVICGRAIYDGSLDLKAALAIARQGGASA.

Catalysis depends on Asp-12, which acts as the Proton acceptor. Residue Asp-133 is the Proton donor of the active site.

This sequence belongs to the HisA/HisF family.

It is found in the cytoplasm. The enzyme catalyses 1-(5-phospho-beta-D-ribosyl)-5-[(5-phospho-beta-D-ribosylamino)methylideneamino]imidazole-4-carboxamide = 5-[(5-phospho-1-deoxy-D-ribulos-1-ylimino)methylamino]-1-(5-phospho-beta-D-ribosyl)imidazole-4-carboxamide. The protein operates within amino-acid biosynthesis; L-histidine biosynthesis; L-histidine from 5-phospho-alpha-D-ribose 1-diphosphate: step 4/9. The protein is 1-(5-phosphoribosyl)-5-[(5-phosphoribosylamino)methylideneamino] imidazole-4-carboxamide isomerase of Zymomonas mobilis subsp. mobilis (strain ATCC 31821 / ZM4 / CP4).